The primary structure comprises 148 residues: MPTFKLVLSDPISGKAMQFEIKDPLAQRFVGLKIGDEIDGVILKDFISLPKGAKIKITGGSGIEGAPMVPGVPGPVKRYILAEGPPGYRPKKRGMRRKKLVRGDTISDSIVQINAVIVYPKDYSGPPAIPIGAKELEKLTKKEEAAAQ.

This sequence belongs to the eukaryotic ribosomal protein eS6 family.

This chain is Small ribosomal subunit protein eS6, found in Pyrobaculum arsenaticum (strain DSM 13514 / JCM 11321 / PZ6).